The following is a 662-amino-acid chain: Protein-arginine deiminase type-1 (662 aa).

Positions 153, 155, 157, 164, 175, 178, 350, 352, 363, 370, 371, 374, 408, and 411 each coordinate Ca(2+). Cys-644 serves as the catalytic Nucleophile.

It belongs to the protein arginine deiminase family. Monomer. Ca(2+) serves as cofactor. Expressed only in the epidermis and uterus.

It localises to the cytoplasm. The catalysed reaction is L-arginyl-[protein] + H2O = L-citrullyl-[protein] + NH4(+). Its function is as follows. Catalyzes the deimination of arginine residues of proteins. This Mus musculus (Mouse) protein is Protein-arginine deiminase type-1 (Padi1).